The chain runs to 309 residues: L-aminoadipate-semialdehyde dehydrogenase-phosphopantetheinyl transferase (309 aa).

Residues Arg-47, 86 to 91, and 108 to 111 contribute to the CoA site; these read RTSKGK and NISH. Asp-129 and Glu-181 together coordinate Mg(2+). A CoA-binding site is contributed by 181 to 185; that stretch reads ESFIK.

It belongs to the P-Pant transferase superfamily. AcpS family. Monomer. Requires Mg(2+) as cofactor.

The protein resides in the cytoplasm. The protein localises to the cytosol. The enzyme catalyses apo-[ACP] + CoA = holo-[ACP] + adenosine 3',5'-bisphosphate + H(+). The catalysed reaction is apo-[ACP] + acetyl-CoA = acetyl-[ACP] + adenosine 3',5'-bisphosphate + H(+). In terms of biological role, catalyzes the post-translational modification of target proteins by phosphopantetheine. Can transfer the 4'-phosphopantetheine moiety from coenzyme A, regardless of whether the CoA is presented in the free thiol form or as an acetyl thioester, to a serine residue of a broad range of acceptors including the acyl carrier domain of FASN. In Rattus norvegicus (Rat), this protein is L-aminoadipate-semialdehyde dehydrogenase-phosphopantetheinyl transferase (Aasdhppt).